We begin with the raw amino-acid sequence, 227 residues long: PKHD-type hydroxylase Bxeno_B2756 (227 aa).

The region spanning 80 to 179 is the Fe2OG dioxygenase domain; the sequence is QVYPPLFNRY…RVASFFWVQS (100 aa). Fe cation-binding residues include His-98, Asp-100, and His-160. Position 170 (Arg-170) interacts with 2-oxoglutarate.

It depends on Fe(2+) as a cofactor. The cofactor is L-ascorbate.

The polypeptide is PKHD-type hydroxylase Bxeno_B2756 (Paraburkholderia xenovorans (strain LB400)).